The sequence spans 733 residues: Nuclear hormone receptor family member nhr-66 (733 aa).

Composition is skewed to low complexity over residues 113-130 and 165-185; these read PAIPSSSSCSEPSTSQAS and QQNRQQHQQQQRQQQQAQQQN. Residues 113-190 are disordered; it reads PAIPSSSSCS…AQQQNSMARK (78 aa). Positions 266–343 form a DNA-binding region, nuclear receptor; the sequence is VPACAICGTD…SGMDKNSVQH (78 aa). 2 NR C4-type zinc fingers span residues 269–289 and 305–326; these read CAICGTDSTGIHFGVDACAAC and CNKGGKCTVVKDGSAGQKCRAC. A disordered region spans residues 361 to 396; the sequence is PDAEFEPSAKVSTVSEPSTSSGPSGGFNQNVSSPAG. Low complexity predominate over residues 371 to 382; sequence VSTVSEPSTSSG. Residues 444–687 enclose the NR LBD domain; it reads CLGDWFRKPS…ACFNQMLDVE (244 aa). Residues 676–687 form an AF-2 region; that stretch reads ADACFNQMLDVE. Residues 691-733 are disordered; sequence VSPDGQKDSEAEQGPSPVSVPEAARGSYQDDDMPPVLEKNCDL.

Belongs to the nuclear hormone receptor family. As to quaternary structure, interacts with nuclear hormone receptor nhr-49; the interaction is direct. Widely expressed, including in hypodermis, gut, muscle, and neuronal cells of the ventral nerve cord, head, and tail ganglia. Expressed in the head ganglion in several sensory and interneurons, including AVA.

Its subcellular location is the nucleus. Functionally, transcription factor. Binds to regulatory elements and regulates transcription of target genes, including the potassium channel accessory subunit mps-2. Negatively regulates transcription of mps-2, thereby modulating age-dependent memory decline. In concert with nuclear hormone receptor nhr-49, involved in regulating target genes with roles in sphingolipid breakdown and lipid remodeling. Plays a role in modulating mitochondrial morphology and function. The sequence is that of Nuclear hormone receptor family member nhr-66 from Caenorhabditis elegans.